Here is a 333-residue protein sequence, read N- to C-terminus: Ribosomal RNA small subunit methyltransferase H (333 aa).

S-adenosyl-L-methionine is bound by residues 31–33 (GGY), Asp49, Phe76, Asp134, and Gln141.

The protein belongs to the methyltransferase superfamily. RsmH family.

It is found in the cytoplasm. The catalysed reaction is cytidine(1402) in 16S rRNA + S-adenosyl-L-methionine = N(4)-methylcytidine(1402) in 16S rRNA + S-adenosyl-L-homocysteine + H(+). Its function is as follows. Specifically methylates the N4 position of cytidine in position 1402 (C1402) of 16S rRNA. This is Ribosomal RNA small subunit methyltransferase H from Wolbachia sp. subsp. Brugia malayi (strain TRS).